Here is an 804-residue protein sequence, read N- to C-terminus: MTSSPFLDPWPSKAVFVRERLGLGERPNDSYCYNSAKNSTVLQGVTFGGIPTVLLLDVSCFLFLILVFSIIRRRFWDYGRIALVSEAGSEARFQRLSSSSSGQQDFENELGCCPWLTAIFRLHDDQILEWCGEDAIHYLSFQRHIIFLLVVISFLSLCVILPVNLSGDLLGKDPYSFGRTTIANLQTDNDLLWLHTVFSVIYLFLTVGFMWHHTRSIRYKEESLVRQTLFITGLPREARKETVESHFRDAYPTCEVVDVQLCYSVAKLIYLCKERKKTEKSLTYYTNLQAKTGRRTLINPKPCGQFCCCEVQGCEREDAISYYTRMNDSLLERITAEESRVQDQPLGMAFVTFREKSMATYILKDFNACKCQGLRCKGEPQPSSYSRELCVSKWTVTFASYPEDICWKNLSIQGVRWWLQWLGINFSLFVVLFFLTTPSIIMSTMDKFNVTKPIHALNNPVISQFFPTLLLWSFSALLPSIVYYSTLLESHWTRSGENRIMVSKVYIFLIFMVLILPSLGLTSLDFFFRWLFDKTSSETSIRLECVFLPDQGAFFVNYVIASAFIGSGMELLRLPGLILYTFRMIMAKTAADRRNVKQNQAFEYEFGAMYAWMLCVFTVIMAYSITCPIIVPFGLIYILLKHMVDRHNLYFAYLPAKLEKRIHFAAVNQALAAPILCLFWLFFFSFLRLGLTAPATLFTFLVVLLTILACLLYTCFGCFKHLSPWNYKTEESASDKGSEAEAHVPPPFTPYVPRILNGLASERTALSPQQQQTYGAIRNISGTLPGQPVAQDPSGTAAYAYQES.

The Extracellular segment spans residues M1–P51. The N-linked (GlcNAc...) asparagine glycan is linked to N38. Residues T52–R74 traverse the membrane as a helical segment. At F75–E133 the chain is on the cytoplasmic side. Residues D134–S166 form a helical membrane-spanning segment. Over G167 to D190 the chain is Extracellular. The helical transmembrane segment at L191–S216 threads the bilayer. Over I217–V415 the chain is Cytoplasmic. The tract at residues R218–Q413 is intracellular linker IL2; confers mechanosensitivity. The chain crosses the membrane as a helical span at residues R416–S443. Topologically, residues T444–V461 are extracellular. Residue N449 is glycosylated (N-linked (GlcNAc...) asparagine). Residues I462–E489 form a helical membrane-spanning segment. Over S490 to R494 the chain is Cytoplasmic. A helical membrane pass occupies residues S495–L531. The Extracellular portion of the chain corresponds to F532–A553. The helical transmembrane segment at F554–I585 threads the bilayer. The gating helix stretch occupies residues F554 to I585. The Cytoplasmic segment spans residues M586–E605. The helical transmembrane segment at F606–Y623 threads the bilayer. Topologically, residues S624–C627 are extracellular. The helical transmembrane segment at P628 to Y650 threads the bilayer. Residues F651–K660 lie on the Cytoplasmic side of the membrane. The chain crosses the membrane as a helical span at residues R661–R688. The Extracellular segment spans residues L689–A693. Residues P694–L708 traverse the membrane as a helical segment. Topologically, residues A709–S804 are cytoplasmic. S738 carries the phosphoserine modification.

The protein belongs to the CSC1 (TC 1.A.17) family. As to quaternary structure, monomer. In terms of processing, N-Glycosylated.

It localises to the lysosome membrane. The protein localises to the early endosome membrane. Its subcellular location is the cell membrane. The enzyme catalyses Ca(2+)(in) = Ca(2+)(out). In terms of biological role, mechanosensitive cation channel with low conductance and high activation threshold. In contrast to TMEM63B, does not show phospholipid scramblase activity. Acts as a regulator of lysosomal morphology by mediating lysosomal mechanosensitivity. Important for the baby's first breath and respiration throughout life. Upon lung inflation conducts cation currents in alveolar type 1 and 2 cells triggering lamellar body exocytosis and surfactant secretion into airspace. Also acts as an osmosensitive cation channel preferentially activated by hypotonic stress. This Mus musculus (Mouse) protein is Mechanosensitive cation channel TMEM63A.